The chain runs to 574 residues: (R)-mandelonitrile lyase 4 (574 aa).

Residues 1-27 (MEKSTMSAVVLVLNLLVLHLQYSEVHS) form the signal peptide. N-linked (GlcNAc...) asparagine glycosylation occurs at Asn-30. An FAD-binding site is contributed by 64-65 (TS). An N-linked (GlcNAc...) asparagine glycan is attached at Asn-76. FAD-binding positions include 83 to 84 (ER), Thr-134, and 138 to 141 (NAGV). N-linked (GlcNAc...) asparagine glycosylation is found at Asn-146, Asn-151, and Asn-179. Val-245 contacts FAD. 2 N-linked (GlcNAc...) asparagine glycosylation sites follow: Asn-268 and Asn-310. Cys-357 provides a ligand contact to substrate. 3 N-linked (GlcNAc...) asparagine glycosylation sites follow: Asn-381, Asn-407, and Asn-468. Cys-428 and Cys-479 are disulfide-bonded. Tyr-486 serves as a coordination point for substrate. FAD contacts are provided by residues 487–488 (WH) and Gly-516. His-488 (proton donor) is an active-site residue. The active-site Proton acceptor is His-526. 527–528 (PQ) lines the FAD pocket.

Belongs to the GMC oxidoreductase family. As to quaternary structure, monomer. FAD serves as cofactor.

The protein resides in the vacuole. It localises to the aleurone grain. It carries out the reaction (R)-mandelonitrile = benzaldehyde + hydrogen cyanide. Functionally, involved in cyanogenesis, the release of HCN from injured tissues. Catalyzes the stereospecific addition of HCN to a variety of aldehydes in vitro. It is a major seed constituent, and could have the additional role of a storage form for reduced nitrogen. This chain is (R)-mandelonitrile lyase 4 (MDL4), found in Prunus serotina (Black cherry).